Reading from the N-terminus, the 353-residue chain is MSYQVTIEPIGTTIEVEEDQTILDAALRQGVWLPFACGHGTCGTCKVQVTDGFYDVGEASPFALMDIERDENKVLACCCKPQSDMVIEADVDEDPDFLGHLVQDYQATVIEIKDLSPTIKGIRLQLDRPIEFQAGQYINVQFPNIEGTRAFSIANSPSEVGIVELHIRKVEGGAATTYVHEQLATGDQLDISGPYGQFFVRKSDDQNAIFIAGGSGLSSPQSMILDLLESGDSRTIYLFQGARDLAELYNRELFEQLVKDYPNFRYIPALNAPKPEDQWTGFTGFVHEAVADYFENRCGGHKAYLCGPPIMIDSAISTLMQSRLFERDIHTERFLSAADGAAGQSRSALFKHI.

The 2Fe-2S ferredoxin-type domain occupies 3–93 (YQVTIEPIGT…DMVIEADVDE (91 aa)). Residues Cys-37, Cys-42, Cys-45, and Cys-77 each coordinate [2Fe-2S] cluster. Positions 102-201 (VQDYQATVIE…SGPYGQFFVR (100 aa)) constitute an FAD-binding FR-type domain.

As to quaternary structure, the multicomponent enzyme phenol hydroxylase is formed by P0, P1, P2, P3, P4 and P5 polypeptides. FAD serves as cofactor. The cofactor is [2Fe-2S] cluster.

The enzyme catalyses phenol + NADPH + O2 + H(+) = catechol + NADP(+) + H2O. The protein operates within aromatic compound metabolism; phenol degradation. In terms of biological role, catabolizes phenol, and some of its methylated derivatives. P5 is required for growth on phenol, and for in vitro phenol hydroxylase activity. Functionally, probable electron transfer from NADPH, via FAD and the 2Fe-2S center, to the oxygenase activity site of the enzyme. This is Phenol hydroxylase P5 protein (mphP) from Acinetobacter pittii (strain PHEA-2).